Reading from the N-terminus, the 361-residue chain is Phosphoserine aminotransferase (361 aa).

R42 contributes to the L-glutamate binding site. Pyridoxal 5'-phosphate-binding positions include 76–77, W102, T153, D173, and Q196; that span reads AR. Residue K197 is modified to N6-(pyridoxal phosphate)lysine. Pyridoxal 5'-phosphate is bound at residue 238-239; that stretch reads NT.

It belongs to the class-V pyridoxal-phosphate-dependent aminotransferase family. SerC subfamily. In terms of assembly, homodimer. It depends on pyridoxal 5'-phosphate as a cofactor.

It is found in the cytoplasm. The catalysed reaction is O-phospho-L-serine + 2-oxoglutarate = 3-phosphooxypyruvate + L-glutamate. It carries out the reaction 4-(phosphooxy)-L-threonine + 2-oxoglutarate = (R)-3-hydroxy-2-oxo-4-phosphooxybutanoate + L-glutamate. It participates in amino-acid biosynthesis; L-serine biosynthesis; L-serine from 3-phospho-D-glycerate: step 2/3. It functions in the pathway cofactor biosynthesis; pyridoxine 5'-phosphate biosynthesis; pyridoxine 5'-phosphate from D-erythrose 4-phosphate: step 3/5. Catalyzes the reversible conversion of 3-phosphohydroxypyruvate to phosphoserine and of 3-hydroxy-2-oxo-4-phosphonooxybutanoate to phosphohydroxythreonine. The sequence is that of Phosphoserine aminotransferase from Mannheimia succiniciproducens (strain KCTC 0769BP / MBEL55E).